Consider the following 139-residue polypeptide: ATP synthase epsilon chain, chloroplastic (139 aa).

It belongs to the ATPase epsilon chain family. In terms of assembly, F-type ATPases have 2 components, CF(1) - the catalytic core - and CF(0) - the membrane proton channel. CF(1) has five subunits: alpha(3), beta(3), gamma(1), delta(1), epsilon(1). CF(0) has three main subunits: a, b and c.

Its subcellular location is the plastid. It is found in the chloroplast thylakoid membrane. In terms of biological role, produces ATP from ADP in the presence of a proton gradient across the membrane. This Dictyota dichotoma protein is ATP synthase epsilon chain, chloroplastic.